A 1136-amino-acid chain; its full sequence is Collagen alpha-1(XIX) chain (1136 aa).

Positions M1–C23 are cleaved as a signal peptide. An N-linked (GlcNAc...) asparagine glycan is attached at N47. The Laminin G-like domain occupies N47–A231. 4 disordered regions span residues D252 to L272, E289 to P673, G699 to D1005, and S1043 to K1136. Positions G254–G266 are enriched in low complexity. A triple-helical region 1 (COL1) region spans residues E289–S348. Collagen-like domains follow at residues G292–G346, D347–G388, and S389–G430. Basic and acidic residues-rich tracts occupy residues H302–L314 and I332–A344. The segment at G367–P426 is triple-helical region 2 (COL2). Over residues T387–K401 the composition is skewed to low complexity. Over residues P414–P426 the composition is skewed to pro residues. Over residues L428–G437 the composition is skewed to low complexity. The interval G442–I682 is triple-helical region 3 (COL3). Residues H472 to E490 are compositionally biased toward basic and acidic residues. Low complexity-rich tracts occupy residues L511 to P523 and P567 to G577. 6 Collagen-like domains span residues G519–G577, I578–G618, G620–P673, K722–G777, L778–G810, and G833–P891. The span at P634–L645 shows a compositional bias: low complexity. Residues Q694–P812 are triple-helical region 4 (COL4). Basic and acidic residues-rich tracts occupy residues G714 to V725 and E737 to E758. Over residues P764 to T788 the composition is skewed to low complexity. Composition is skewed to pro residues over residues P800–V811 and Y834–D846. The segment at G827 to A1006 is triple-helical region 5 (COL5). Over residues P877–P886 the composition is skewed to low complexity. Over residues P937–D948 the composition is skewed to basic and acidic residues. A Cell attachment site motif is present at residues R946–D948. Residues G1048–P1105 are triple-helical region 6 (COL6). Residues S1087–S1101 show a composition bias toward low complexity. Over residues P1102–P1113 the composition is skewed to pro residues.

The protein belongs to the fibril-associated collagens with interrupted helices (FACIT) family. Oligomer; disulfide-linked. In terms of processing, prolines at the third position of the tripeptide repeating unit (G-X-Y) are hydroxylated in some or all of the chains.

The protein localises to the secreted. The protein resides in the extracellular space. Its subcellular location is the extracellular matrix. May act as a cross-bridge between fibrils and other extracellular matrix molecules. Involved in skeletal myogenesis in the developing esophagus. May play a role in organization of the pericellular matrix or the sphinteric smooth muscle. The polypeptide is Collagen alpha-1(XIX) chain (Mus musculus (Mouse)).